The sequence spans 394 residues: Phosphopentomutase (394 aa).

The Mn(2+) site is built by Asp-13, Asp-286, His-291, Asp-327, His-328, and His-339.

Belongs to the phosphopentomutase family. It depends on Mn(2+) as a cofactor.

It localises to the cytoplasm. The catalysed reaction is 2-deoxy-alpha-D-ribose 1-phosphate = 2-deoxy-D-ribose 5-phosphate. The enzyme catalyses alpha-D-ribose 1-phosphate = D-ribose 5-phosphate. The protein operates within carbohydrate degradation; 2-deoxy-D-ribose 1-phosphate degradation; D-glyceraldehyde 3-phosphate and acetaldehyde from 2-deoxy-alpha-D-ribose 1-phosphate: step 1/2. Functionally, isomerase that catalyzes the conversion of deoxy-ribose 1-phosphate (dRib-1-P) and ribose 1-phosphate (Rib-1-P) to deoxy-ribose 5-phosphate (dRib-5-P) and ribose 5-phosphate (Rib-5-P), respectively. The polypeptide is Phosphopentomutase (Bacillus anthracis (strain A0248)).